We begin with the raw amino-acid sequence, 143 residues long: MPKSPSKSSPRKGSPRKGSPRKGSPKRGGKGAKRAGKGGRRNVVKRRRRRRESYGIYIYKVLKQVHPDTGISSRGMSVMNSFVNDVFERIAGEASRLTSANRRSTISSREIQTAVRLLLPGELAKHAVSEGTKAVTKYTTARR.

Residues 1-49 form a disordered region; it reads MPKSPSKSSPRKGSPRKGSPRKGSPKRGGKGAKRAGKGGRRNVVKRRRR. Short sequence motifs (SPKK motif) lie at residues 4–7, 9–12, 14–17, 19–22, and 24–27; these read SPSK, SPRK, and SPKR. A compositionally biased stretch (basic residues) spans 9–49; sequence SPRKGSPRKGSPRKGSPKRGGKGAKRAGKGGRRNVVKRRRR. 3 positions are modified to phosphoserine: S14, S19, and S24. An O-linked (GlcNAc) serine glycan is attached at S129. K137 participates in a covalent cross-link: Glycyl lysine isopeptide (Lys-Gly) (interchain with G-Cter in ubiquitin).

The protein belongs to the histone H2B family. In terms of assembly, the nucleosome is a histone octamer containing two molecules each of H2A, H2B, H3 and H4 assembled in one H3-H4 heterotetramer and two H2A-H2B heterodimers. The octamer wraps approximately 147 bp of DNA. Monoubiquitination of Lys-137 gives a specific tag for epigenetic transcriptional activation and is also prerequisite for histone H3 'Lys-4' and 'Lys-79' methylation. In terms of processing, phosphorylated on SPKK motifs 3, 4 and 5; which may regulate DNA binding. Dephosphorylated during maturation of spermatids to mature sperm and rephosphorylated at fertilization. Post-translationally, glcNAcylation at Ser-129 promotes monoubiquitination of Lys-137. It fluctuates in response to extracellular glucose, and associates with transcribed genes.

The protein resides in the nucleus. It is found in the chromosome. In terms of biological role, core component of nucleosome. Nucleosomes wrap and compact DNA into chromatin, limiting DNA accessibility to the cellular machineries which require DNA as a template. Histones thereby play a central role in transcription regulation, DNA repair, DNA replication and chromosomal stability. DNA accessibility is regulated via a complex set of post-translational modifications of histones, also called histone code, and nucleosome remodeling. The polypeptide is Histone H2B.2, sperm (Psammechinus miliaris (Green sea urchin)).